A 237-amino-acid chain; its full sequence is Ribonuclease PH (237 aa).

Phosphate is bound by residues Arg-86 and Gly-124 to Arg-126.

It belongs to the RNase PH family. Homohexameric ring arranged as a trimer of dimers.

The enzyme catalyses tRNA(n+1) + phosphate = tRNA(n) + a ribonucleoside 5'-diphosphate. Its function is as follows. Phosphorolytic 3'-5' exoribonuclease that plays an important role in tRNA 3'-end maturation. Removes nucleotide residues following the 3'-CCA terminus of tRNAs; can also add nucleotides to the ends of RNA molecules by using nucleoside diphosphates as substrates, but this may not be physiologically important. Probably plays a role in initiation of 16S rRNA degradation (leading to ribosome degradation) during starvation. The chain is Ribonuclease PH from Methylocella silvestris (strain DSM 15510 / CIP 108128 / LMG 27833 / NCIMB 13906 / BL2).